The following is a 381-amino-acid chain: Cobalt-precorrin-5B C(1)-methyltransferase (381 aa).

The protein belongs to the CbiD family.

It catalyses the reaction Co-precorrin-5B + S-adenosyl-L-methionine = Co-precorrin-6A + S-adenosyl-L-homocysteine. Its pathway is cofactor biosynthesis; adenosylcobalamin biosynthesis; cob(II)yrinate a,c-diamide from sirohydrochlorin (anaerobic route): step 6/10. Catalyzes the methylation of C-1 in cobalt-precorrin-5B to form cobalt-precorrin-6A. This Methylococcus capsulatus (strain ATCC 33009 / NCIMB 11132 / Bath) protein is Cobalt-precorrin-5B C(1)-methyltransferase.